Here is a 2492-residue protein sequence, read N- to C-terminus: Polyketide synthase 19 (2492 aa).

Residues 12–463 form the Ketosynthase family 3 (KS3) domain; sequence REPIAIVGTS…GTNAHAIVES (452 aa). Residues Cys202, His341, and His383 each act as for beta-ketoacyl synthase activity in the active site. The interval 571–866 is malonyl-CoA:ACP transacylase (MAT) domain; it reads VFTGQGAQWA…LEVGPHPALK (296 aa). The interval 967 to 1110 is N-terminal hotdog fold; it reads HELLGRSVSH…GRIRLWLEQP (144 aa). Residues 967 to 1270 form a dehydratase (DH) domain region; that stretch reads HELLGRSVSH…GVQMTAIGKP (304 aa). In terms of domain architecture, PKS/mFAS DH spans 967–1273; sequence HELLGRSVSH…MTAIGKPPDR (307 aa). Catalysis depends on His1001, which acts as the Proton acceptor; for dehydratase activity. The C-terminal hotdog fold stretch occupies residues 1125–1273; it reads MSELNMAQVY…MTAIGKPPDR (149 aa). Asp1183 (proton donor; for dehydratase activity) is an active-site residue. Positions 1431–1604 are C-methyltransferase (CMeT) domain; that stretch reads LGAIVKQLGH…KTTGFSGVDI (174 aa). The interval 2118–2293 is ketoreductase (KR) domain; the sequence is SYLLFGMTGD…AGSIVHISVL (176 aa). Positions 2404 to 2479 constitute a Carrier domain; it reads PILEKRFAQA…RVCDDVLVDW (76 aa). An O-(pantetheine 4'-phosphoryl)serine modification is found at Ser2438.

In terms of biological role, highly reducing polyketide synthase; part of the gene cluster that mediates the biosynthesis of fujikurins A-D, secondary metabolites playing a role during rice infection. The polyketide synthase PKS19 acts with the trans-enoyl reductase FFUJ_12240 and the polyketide transferase FFUJ_12241 to produce fujikurins, however, the biosynthesis pathway has not been identified yet. This chain is Polyketide synthase 19, found in Gibberella fujikuroi (strain CBS 195.34 / IMI 58289 / NRRL A-6831) (Bakanae and foot rot disease fungus).